Reading from the N-terminus, the 729-residue chain is Catalase-peroxidase (729 aa).

The segment at 1 to 24 (MDAKTNDGKAGQCPFTSGRGHKNR) is disordered. Positions 95-217 (WHSAGTYRIT…LAAVQMGLIY (123 aa)) form a cross-link, tryptophyl-tyrosyl-methioninium (Trp-Tyr) (with M-243). The active-site Proton acceptor is the His-96. A cross-link (tryptophyl-tyrosyl-methioninium (Tyr-Met) (with W-95)) is located at residues 217 to 243 (YVNPEGPNGQPDPLAAAKDIRETFLRM). His-258 contacts heme b.

The protein belongs to the peroxidase family. Peroxidase/catalase subfamily. As to quaternary structure, homodimer or homotetramer. Requires heme b as cofactor. Formation of the three residue Trp-Tyr-Met cross-link is important for the catalase, but not the peroxidase activity of the enzyme.

The catalysed reaction is H2O2 + AH2 = A + 2 H2O. It catalyses the reaction 2 H2O2 = O2 + 2 H2O. Bifunctional enzyme with both catalase and broad-spectrum peroxidase activity. The polypeptide is Catalase-peroxidase (Nitrobacter winogradskyi (strain ATCC 25391 / DSM 10237 / CIP 104748 / NCIMB 11846 / Nb-255)).